The primary structure comprises 547 residues: Chaperonin GroEL 1 (547 aa).

Residues 30–33, Lys-51, 87–91, Gly-415, 479–481, and Asp-495 each bind ATP; these read TLGP, DGTTT, and NAA.

The protein belongs to the chaperonin (HSP60) family. As to quaternary structure, forms a cylinder of 14 subunits composed of two heptameric rings stacked back-to-back. Interacts with the co-chaperonin GroES.

The protein resides in the cytoplasm. It catalyses the reaction ATP + H2O + a folded polypeptide = ADP + phosphate + an unfolded polypeptide.. Functionally, together with its co-chaperonin GroES, plays an essential role in assisting protein folding. The GroEL-GroES system forms a nano-cage that allows encapsulation of the non-native substrate proteins and provides a physical environment optimized to promote and accelerate protein folding. This chain is Chaperonin GroEL 1, found in Vibrio parahaemolyticus serotype O3:K6 (strain RIMD 2210633).